Consider the following 130-residue polypeptide: Putative protein ZNF815 (130 aa).

In Homo sapiens (Human), this protein is Putative protein ZNF815 (ZNF815P).